Consider the following 225-residue polypeptide: Endoglucanase (225 aa).

The first 15 residues, 1-15 (MKVFVVLAAIVAIAN), serve as a signal peptide directing secretion. Residue aspartate 29 is the Nucleophile of the active site. Intrachain disulfides connect cysteine 30–cysteine 152, cysteine 31–cysteine 66, cysteine 35–cysteine 103, cysteine 50–cysteine 74, cysteine 104–cysteine 219, cysteine 106–cysteine 209, and cysteine 176–cysteine 187. An N-linked (GlcNAc...) asparagine glycan is attached at asparagine 55. Aspartate 138 (proton donor) is an active-site residue.

Belongs to the glycosyl hydrolase 45 (cellulase K) family. In terms of processing, N- and O-glycosylated. Contains hybrid- and complex-type N-glycans.

Its subcellular location is the secreted. It catalyses the reaction Endohydrolysis of (1-&gt;4)-beta-D-glucosidic linkages in cellulose, lichenin and cereal beta-D-glucans.. Activity is not affected by metal ions except Mn(2+), which reduces the activity by 40-50%. However, no significant change in activity in response to 1 mM EDTA. Functionally, hydrolyzes carboxymethylcellulose (CMC). Also hydrolyzes lichenan and barley beta-1,4-D-glucan. CMC is hydrolyzed majorily to cellobiose (G2), cellotriose (G3) and cellotetraose (G4). Cellohexaose (G6) is hydrolyzed to G4 and G2 with traces of G3. Cellopentaose (G5) is completely hydrolyzed to G2 and G3, and G4 is partially hydrolyzed to G2. Does not hydrolyze G2 or G3. Does not hydrolyze crystalline cellulose, soluble starch, xylan, mannan or laminarin. The sequence is that of Endoglucanase from Cryptopygus antarcticus (Antarctic springtail).